The sequence spans 117 residues: MKHRVDGRKLGRKTEARIALLRTLSKQLVIHGEVETTLPKAKELKRFADKLVTHAKSKELHDIRLVEKHLGDRELVKKLTDEIAPRFAEVNGGYTTVLKTGFRKGDGAPTAIVRWSK.

This sequence belongs to the bacterial ribosomal protein bL17 family. In terms of assembly, part of the 50S ribosomal subunit. Contacts protein L32.

The protein is Large ribosomal subunit protein bL17 of Coprothermobacter proteolyticus (strain ATCC 35245 / DSM 5265 / OCM 4 / BT).